The primary structure comprises 586 residues: Lamin-B1 (586 aa).

Residues 1–31 are disordered; it reads MATATPVPPRMGSRAGGPTTPLSPTRLSRLQ. N-acetylalanine is present on A2. The interval 2 to 34 is head; it reads ATATPVPPRMGSRAGGPTTPLSPTRLSRLQEKE. Phosphothreonine is present on residues T3 and T5. Residue R14 is modified to Omega-N-methylarginine. The residue at position 20 (T20) is a Phosphothreonine. S23 is modified (phosphoserine). At T25 the chain carries Phosphothreonine. Phosphoserine is present on S28. The IF rod domain occupies 32–388; that stretch reads EKEELRELND…KLLEGEEERL (357 aa). The interval 35–69 is coil 1A; it reads ELRELNDRLAVYIDKVRSLETENSALQLQVTEREE. Positions 70–81 are linker 1; it reads VRGRELTGLKAL. The interval 82 to 215 is coil 1B; that stretch reads YETELADARR…EFRKSMYEEE (134 aa). K102 is covalently cross-linked (Glycyl lysine isopeptide (Lys-Gly) (interchain with G-Cter in SUMO2)). The residue at position 111 (K111) is an N6-acetyllysine. K123 is covalently cross-linked (Glycyl lysine isopeptide (Lys-Gly) (interchain with G-Cter in SUMO2)). S126 carries the post-translational modification Phosphoserine. A Glycyl lysine isopeptide (Lys-Gly) (interchain with G-Cter in SUMO2) cross-link involves residue K145. Position 157 is an N6-acetyllysine; alternate (K157). A Glycyl lysine isopeptide (Lys-Gly) (interchain with G-Cter in SUMO2); alternate cross-link involves residue K157. At S158 the chain carries Phosphoserine. K181 is covalently cross-linked (Glycyl lysine isopeptide (Lys-Gly) (interchain with G-Cter in SUMO2)). Phosphoserine is present on residues S200, S210, and S232. Residues 216–243 form a linker 2 region; it reads INETRRKHETRLVEVDSGRQIEYEYKLA. Glycyl lysine isopeptide (Lys-Gly) (interchain with G-Cter in SUMO2) cross-links involve residues K241 and K261. The segment at 244-386 is coil 2; the sequence is QALHEMREQH…YRKLLEGEEE (143 aa). K271 carries the post-translational modification N6-acetyllysine; alternate. Residue K271 forms a Glycyl lysine isopeptide (Lys-Gly) (interchain with G-Cter in SUMO2); alternate linkage. S278 and S302 each carry phosphoserine. K312 participates in a covalent cross-link: Glycyl lysine isopeptide (Lys-Gly) (interchain with G-Cter in SUMO2). K330 carries the N6-acetyllysine; alternate modification. K330 is covalently cross-linked (Glycyl lysine isopeptide (Lys-Gly) (interchain with G-Cter in SUMO2); alternate). A phosphoserine mark is found at S375 and S393. The segment at 387–586 is tail; the sequence is RLKLSPSPSS…RASNRSCAIM (200 aa). Residues 388-432 form a disordered region; that stretch reads LKLSPSPSSRVTVSRASSSRSVRTTRGKRKRVDVEESEASSSVSI. Over residues 390–409 the composition is skewed to low complexity; that stretch reads LSPSPSSRVTVSRASSSRSV. T399 is a glycosylation site (O-linked (GlcNAc) threonine). At R413 the chain carries Omega-N-methylarginine. Positions 415-420 match the Nuclear localization signal motif; the sequence is KRKRVD. The LTD domain occupies 430 to 546; the sequence is VSISHSASAT…EEVAQRSTVF (117 aa). At K483 the chain carries N6-acetyllysine. Residue K532 forms a Glycyl lysine isopeptide (Lys-Gly) (interchain with G-Cter in SUMO2) linkage. S534 is modified (phosphoserine). K547 participates in a covalent cross-link: Glycyl lysine isopeptide (Lys-Gly) (interchain with G-Cter in SUMO2). At T575 the chain carries Phosphothreonine. C583 is modified (cysteine methyl ester). C583 carries S-farnesyl cysteine lipidation. Residues 584–586 constitute a propeptide, removed in mature form; it reads AIM.

This sequence belongs to the intermediate filament family. As to quaternary structure, homodimer. Lamin dimers then assemble into dimeric head-to-tail polymers. Ultimately, two head-to-tail polymers assemble laterally into a protofilament with a uniformly shaped rod of 3.5 nm in diameter. Interacts with SPAG4 and SEPT12. In terms of processing, B-type lamins undergo a series of modifications, such as farnesylation and phosphorylation. Increased phosphorylation of the lamins occurs before envelope disintegration and probably plays a role in regulating lamin associations. Phosphorylation plays a key role in lamin organization, subcellular localization and nuclear envelope disintegration. Phosphorylation by CDK1 at Ser-23 and Ser-393 at the onset of mitosis drives lamin disassembly and nuclear envelope breakdown.

The protein resides in the nucleus lamina. Its function is as follows. Lamins are intermediate filament proteins that assemble into a filamentous meshwork, and which constitute the major components of the nuclear lamina, a fibrous layer on the nucleoplasmic side of the inner nuclear membrane. Lamins provide a framework for the nuclear envelope, bridging the nuclear envelope and chromatin, thereby playing an important role in nuclear assembly, chromatin organization, nuclear membrane and telomere dynamics. The structural integrity of the lamina is strictly controlled by the cell cycle, as seen by the disintegration and formation of the nuclear envelope in prophase and telophase, respectively. This chain is Lamin-B1 (LMNB1), found in Homo sapiens (Human).